The chain runs to 359 residues: Tryptophan 2,3-dioxygenase (359 aa).

Substrate-binding positions include 38-42 (FIIVH) and R109. Residue H295 participates in heme binding. T309 is a binding site for substrate.

The protein belongs to the tryptophan 2,3-dioxygenase family. As to quaternary structure, homotetramer. Heme is required as a cofactor.

The enzyme catalyses L-tryptophan + O2 = N-formyl-L-kynurenine. The protein operates within amino-acid degradation; L-tryptophan degradation via kynurenine pathway; L-kynurenine from L-tryptophan: step 1/2. In terms of biological role, heme-dependent dioxygenase that catalyzes the oxidative cleavage of the L-tryptophan (L-Trp) pyrrole ring and converts L-tryptophan to N-formyl-L-kynurenine. Catalyzes the oxidative cleavage of the indole moiety. In Bdellovibrio bacteriovorus (strain ATCC 15356 / DSM 50701 / NCIMB 9529 / HD100), this protein is Tryptophan 2,3-dioxygenase.